The sequence spans 431 residues: Glutamate-1-semialdehyde 2,1-aminomutase (431 aa).

Residue K269 is modified to N6-(pyridoxal phosphate)lysine.

It belongs to the class-III pyridoxal-phosphate-dependent aminotransferase family. HemL subfamily. As to quaternary structure, homodimer. Requires pyridoxal 5'-phosphate as cofactor.

The protein localises to the cytoplasm. The catalysed reaction is (S)-4-amino-5-oxopentanoate = 5-aminolevulinate. It participates in porphyrin-containing compound metabolism; protoporphyrin-IX biosynthesis; 5-aminolevulinate from L-glutamyl-tRNA(Glu): step 2/2. The protein operates within porphyrin-containing compound metabolism; chlorophyll biosynthesis. The sequence is that of Glutamate-1-semialdehyde 2,1-aminomutase from Chlorobium phaeobacteroides (strain BS1).